A 689-amino-acid chain; its full sequence is Beta-adrenergic receptor kinase 1 (689 aa).

Residues 1–190 (MADLEAVLAD…ELNIHLTMND (190 aa)) form an N-terminal region. Residues 54 to 175 (TFEKIFSQKL…IESEKFTRFC (122 aa)) form the RGS domain. Residues 191 to 453 (FSVHRIIGRG…AQEVKEDPFF (263 aa)) enclose the Protein kinase domain. ATP contacts are provided by residues 197–205 (IGRGGFGEV) and Lys220. The Proton acceptor role is filled by Asp317. The 68-residue stretch at 454 to 521 (KAVDWQMVLL…TISERWQQEV (68 aa)) folds into the AGC-kinase C-terminal domain. The region spanning 558–652 (DCIMHGYMSK…WKKELRDVYR (95 aa)) is the PH domain. Residues 665 to 689 (KNKPRSPVVELSKMPLTQRGSANGL) form a disordered region. Ser670 bears the Phosphoserine mark.

The protein belongs to the protein kinase superfamily. AGC Ser/Thr protein kinase family. GPRK subfamily. Interacts with the heterodimer formed by GNB1 and GNG2. Interacts with GIT1. Interacts with, and phosphorylates chemokine-stimulated CCR5. Interacts with ARRB1. Interacts with LPAR1 and LPAR2. Interacts with RALA in response to LPAR1 activation. ADRBK1 and RALA mutually inhibit each other's binding to LPAR1. Interacts with ADRB2.

It is found in the cytoplasm. The protein localises to the cell membrane. It localises to the postsynapse. The protein resides in the presynapse. It carries out the reaction [beta-adrenergic receptor] + ATP = [beta-adrenergic receptor]-phosphate + ADP + H(+). With respect to regulation, in contrast to other AGC family kinases, the catalytic activity is solely regulated by the binding of substrates and ligands, not by phosphorylation of the kinase domain. In terms of biological role, specifically phosphorylates the agonist-occupied form of the beta-adrenergic and closely related receptors, probably inducing a desensitization of them. Does not act on HTR1B/5-hydroxytryptamine 1B receptor. Key regulator of LPAR1 signaling. Competes with RALA for binding to LPAR1 thus affecting the signaling properties of the receptor. Desensitizes LPAR1 and LPAR2 in a phosphorylation-independent manner. Inhibits relaxation of airway smooth muscle in response to blue light. This Didelphis virginiana (North American opossum) protein is Beta-adrenergic receptor kinase 1.